We begin with the raw amino-acid sequence, 241 residues long: Probable GTP-binding protein EngB (241 aa).

One can recognise an EngB-type G domain in the interval 56-240 (GPVEIAFAGR…RAAIALLLKE (185 aa)). Residues 64–71 (GRSNVGKS), 91–95 (GRTQE), 118–121 (DMPG), 185–188 (TKID), and 219–221 (TSS) contribute to the GTP site. Mg(2+)-binding residues include S71 and T93.

Belongs to the TRAFAC class TrmE-Era-EngA-EngB-Septin-like GTPase superfamily. EngB GTPase family. It depends on Mg(2+) as a cofactor.

Necessary for normal cell division and for the maintenance of normal septation. This is Probable GTP-binding protein EngB from Brucella suis biovar 1 (strain 1330).